Reading from the N-terminus, the 261-residue chain is Putative methyltransferase MJ0046 (261 aa).

Belongs to the methyltransferase superfamily.

The polypeptide is Putative methyltransferase MJ0046 (Methanocaldococcus jannaschii (strain ATCC 43067 / DSM 2661 / JAL-1 / JCM 10045 / NBRC 100440) (Methanococcus jannaschii)).